Consider the following 528-residue polypeptide: MVSRSAFLLFCVLFLATEETLASLFSSRLIHRFSDEGRASIKTPSSSDSLPNKQSLEYYRLLAESDFRRQRMNLGAKVQSLVPSEGSKTISSGNDFGWLHYTWIDIGTPSVSFLVALDTGSNLLWIPCNCVQCAPLTSTYYSSLATKDLNEYNPSSSSTSKVFLCSHKLCDSASDCESPKEQCPYTVNYLSGNTSSSGLLVEDILHLTYNTNNRLMNGSSSVKARVVIGCGKKQSGDYLDGVAPDGLMGLGPAEISVPSFLSKAGLMRNSFSLCFDEEDSGRIYFGDMGPSIQQSTPFLQLDNNKYSGYIVGVEACCIGNSCLKQTSFTTFIDSGQSFTYLPEEIYRKVALEIDRHINATSKNFEGVSWEYCYESSAEPKVPAIKLKFSHNNTFVIHKPLFVFQQSQGLVQFCLPISPSGQEGIGSIGQNYMRGYRMVFDRENMKLGWSPSKCQEDKIEPPQASPGSTSSPNPLPTDEQQSRGGHAVSPAIAGKTPSKTPSSSSSYSFSSIMRLFNSLLLLHWLASLM.

Positions 1–22 (MVSRSAFLLFCVLFLATEETLA) are cleaved as a signal peptide. The Peptidase A1 domain occupies 100–449 (HYTWIDIGTP…DRENMKLGWS (350 aa)). The active site involves aspartate 118. N-linked (GlcNAc...) asparagine glycosylation is found at asparagine 193 and asparagine 217. Aspartate 333 is a catalytic residue. N-linked (GlcNAc...) asparagine glycosylation is found at asparagine 358 and asparagine 391. Positions 451 to 503 (SKCQEDKIEPPQASPGSTSSPNPLPTDEQQSRGGHAVSPAIAGKTPSKTPSSS) are disordered. A compositionally biased stretch (polar residues) spans 464–482 (SPGSTSSPNPLPTDEQQSR). A compositionally biased stretch (low complexity) spans 494 to 503 (KTPSKTPSSS). Residue serine 503 is the site of GPI-anchor amidated serine attachment. The propeptide at 504-528 (SSYSFSSIMRLFNSLLLLHWLASLM) is removed in mature form.

The protein belongs to the peptidase A1 family.

The protein localises to the cell membrane. This Arabidopsis thaliana (Mouse-ear cress) protein is Aspartic proteinase-like protein 1.